The chain runs to 271 residues: Extracellular metalloprotease ARB_05317 (271 aa).

The first 19 residues, methionine 1–alanine 19, serve as a signal peptide directing secretion. Asparagine 136 carries an N-linked (GlcNAc...) asparagine glycan. Histidine 185 contributes to the Zn(2+) binding site. The active site involves glutamate 186. Position 189 (histidine 189) interacts with Zn(2+). An N-linked (GlcNAc...) asparagine glycan is attached at asparagine 200. Cysteine 222 and cysteine 248 are oxidised to a cystine.

Belongs to the peptidase M43B family.

The protein resides in the secreted. Functionally, secreted metalloproteinase that allows assimilation of proteinaceous substrates. Plays a pivotal role as a pathogenicity determinant during infections and contributes to the ability of the pathogen to persist within the mammalian host. The polypeptide is Extracellular metalloprotease ARB_05317 (Arthroderma benhamiae (strain ATCC MYA-4681 / CBS 112371) (Trichophyton mentagrophytes)).